The following is a 165-amino-acid chain: Alanine- and arginine-rich domain-containing protein (165 aa).

Residues 136–165 (QQLKKRQDQERASKPQSPQDEEMNPECGNA) form a disordered region.

The protein is Alanine- and arginine-rich domain-containing protein (Aard) of Rattus norvegicus (Rat).